The sequence spans 359 residues: Guanine nucleotide-binding protein G(o) subunit alpha (359 aa).

The interval 1–26 is disordered; the sequence is MGGCVSATPEEREAKTRSSVIDRQQR. Gly-2 carries the N-myristoyl glycine lipid modification. Residue Cys-4 is the site of S-palmitoyl cysteine attachment. One can recognise a G-alpha domain in the interval 34–359; the sequence is NTIKILLLGA…RENLEAANLL (326 aa). The tract at residues 37 to 50 is G1 motif; it reads KILLLGAGESGKST. GTP contacts are provided by residues 42-49, 178-184, 203-207, 272-275, and Ala-331; these read GAGESGKS, LRSRVQT, DVGGQ, and NKAD. The Mg(2+) site is built by Ser-49 and Thr-184. The interval 176–184 is G2 motif; sequence DVLRSRVQT. Positions 199–208 are G3 motif; the sequence is YRVVDVGGQR. The tract at residues 268–275 is G4 motif; the sequence is ILFLNKAD. Residues 329 to 334 are G5 motif; that stretch reads TTATDT.

Belongs to the G-alpha family. G(i/o/t/z) subfamily. G proteins are composed of 3 units; alpha, beta and gamma. The alpha chain contains the guanine nucleotide binding site.

In terms of biological role, guanine nucleotide-binding proteins (G proteins) are involved as modulators or transducers in various transmembrane signaling systems. The G(o) protein function is not clear. This Geodia cydonium (Sponge) protein is Guanine nucleotide-binding protein G(o) subunit alpha.